Here is a 106-residue protein sequence, read N- to C-terminus: MNKIRKGDEIIVITGRDKGKRGTISLRVDDSYVLVDGINLVKKHTKPNPLKGTTGGIVEKSMPIHQSNVAIFNAASGKADRVGIKLLADGKKTRVFKSSGEEIKAA.

This sequence belongs to the universal ribosomal protein uL24 family. In terms of assembly, part of the 50S ribosomal subunit.

One of two assembly initiator proteins, it binds directly to the 5'-end of the 23S rRNA, where it nucleates assembly of the 50S subunit. In terms of biological role, one of the proteins that surrounds the polypeptide exit tunnel on the outside of the subunit. This chain is Large ribosomal subunit protein uL24, found in Polaromonas naphthalenivorans (strain CJ2).